The sequence spans 245 residues: 8-amino-3,8-dideoxy-manno-octulosonate cytidylyltransferase (245 aa).

The protein belongs to the KdsB family.

Its subcellular location is the cytoplasm. The catalysed reaction is 8-amino-3,8-dideoxy-alpha-D-manno-octulosonate + CTP = CMP-8-amino-3,8-dideoxy-alpha-D-manno-oct-2-ulosonate + diphosphate. It functions in the pathway bacterial outer membrane biogenesis; lipopolysaccharide biosynthesis. Its function is as follows. Activates KDO8N (a required 8-carbon sugar) for incorporation into bacterial lipopolysaccharide in the Shewanella genus. The sequence is that of 8-amino-3,8-dideoxy-manno-octulosonate cytidylyltransferase from Shewanella loihica (strain ATCC BAA-1088 / PV-4).